Consider the following 260-residue polypeptide: 21S rRNA pseudouridine(2819) synthase (260 aa).

Asp68 is an active-site residue.

This sequence belongs to the pseudouridine synthase RluA family.

It localises to the mitochondrion. The catalysed reaction is uridine(2819) in 21S rRNA = pseudouridine(2819) in 21S rRNA. Its function is as follows. Pseudouridylate synthase responsible for the pseudouridine-2819 formation in mitochondrial 21S rRNA. May modulate the efficiency or the fidelity of the mitochondrial translation machinery. The protein is 21S rRNA pseudouridine(2819) synthase (PUS5) of Eremothecium gossypii (strain ATCC 10895 / CBS 109.51 / FGSC 9923 / NRRL Y-1056) (Yeast).